Consider the following 581-residue polypeptide: 2-succinyl-5-enolpyruvyl-6-hydroxy-3-cyclohexene-1-carboxylate synthase (581 aa).

It belongs to the TPP enzyme family. MenD subfamily. Homodimer. It depends on Mg(2+) as a cofactor. Mn(2+) is required as a cofactor. Thiamine diphosphate serves as cofactor.

The enzyme catalyses isochorismate + 2-oxoglutarate + H(+) = 5-enolpyruvoyl-6-hydroxy-2-succinyl-cyclohex-3-ene-1-carboxylate + CO2. Its pathway is quinol/quinone metabolism; 1,4-dihydroxy-2-naphthoate biosynthesis; 1,4-dihydroxy-2-naphthoate from chorismate: step 2/7. It functions in the pathway quinol/quinone metabolism; menaquinone biosynthesis. In terms of biological role, catalyzes the thiamine diphosphate-dependent decarboxylation of 2-oxoglutarate and the subsequent addition of the resulting succinic semialdehyde-thiamine pyrophosphate anion to isochorismate to yield 2-succinyl-5-enolpyruvyl-6-hydroxy-3-cyclohexene-1-carboxylate (SEPHCHC). The chain is 2-succinyl-5-enolpyruvyl-6-hydroxy-3-cyclohexene-1-carboxylate synthase from Chlorobium phaeobacteroides (strain BS1).